The sequence spans 379 residues: Histidinol-phosphate aminotransferase (379 aa).

Residue lysine 231 is modified to N6-(pyridoxal phosphate)lysine.

This sequence belongs to the class-II pyridoxal-phosphate-dependent aminotransferase family. Histidinol-phosphate aminotransferase subfamily. As to quaternary structure, homodimer. Pyridoxal 5'-phosphate is required as a cofactor.

It carries out the reaction L-histidinol phosphate + 2-oxoglutarate = 3-(imidazol-4-yl)-2-oxopropyl phosphate + L-glutamate. It participates in amino-acid biosynthesis; L-histidine biosynthesis; L-histidine from 5-phospho-alpha-D-ribose 1-diphosphate: step 7/9. The sequence is that of Histidinol-phosphate aminotransferase from Mycolicibacterium smegmatis (strain ATCC 700084 / mc(2)155) (Mycobacterium smegmatis).